Reading from the N-terminus, the 761-residue chain is Spindle assembly abnormal protein 4 (761 aa).

The segment covering 1–11 (MLPSENGDEDQ) has biased composition (acidic residues). Residues 1 to 109 (MLPSENGDED…SNERREEDNV (109 aa)) are disordered. Residues 51–62 (TPTNSAPSSART) show a composition bias toward polar residues. A compositionally biased stretch (basic and acidic residues) spans 90-106 (ESHDSGNRSESNERREE). The stretch at 129 to 156 (ETCSKVSEEATQLRAEADRITAQANFIN) forms a coiled coil. Residues 164-173 (TPSSYSSNIS) show a composition bias toward low complexity. 2 disordered regions span residues 164–228 (TPSS…QARP) and 252–280 (PRRQPMLPAHHHPSQKENVPERKAPSEHV). A compositionally biased stretch (polar residues) spans 210–223 (QTLSSLASSGSLDT). Positions 265–280 (SQKENVPERKAPSEHV) are enriched in basic and acidic residues. A coiled-coil region spans residues 326–464 (RKKQEEAYAK…EKDDREKEMF (139 aa)). Positions 479–497 (ATGSAASSRLPSVSSLASS) are enriched in low complexity. The segment at 479–510 (ATGSAASSRLPSVSSLASSMKTGSTGKGRTVS) is disordered.

The protein resides in the cytoplasm. It localises to the cytoskeleton. The protein localises to the microtubule organizing center. Its subcellular location is the centrosome. Required for centrosome duplication. Plays a central role in determining centrosome size. This chain is Spindle assembly abnormal protein 4 (sas-4), found in Caenorhabditis briggsae.